The chain runs to 243 residues: 3-deoxy-manno-octulosonate cytidylyltransferase (243 aa).

The protein belongs to the KdsB family.

Its subcellular location is the cytoplasm. The catalysed reaction is 3-deoxy-alpha-D-manno-oct-2-ulosonate + CTP = CMP-3-deoxy-beta-D-manno-octulosonate + diphosphate. The protein operates within nucleotide-sugar biosynthesis; CMP-3-deoxy-D-manno-octulosonate biosynthesis; CMP-3-deoxy-D-manno-octulosonate from 3-deoxy-D-manno-octulosonate and CTP: step 1/1. It participates in bacterial outer membrane biogenesis; lipopolysaccharide biosynthesis. Its function is as follows. Activates KDO (a required 8-carbon sugar) for incorporation into bacterial lipopolysaccharide in Gram-negative bacteria. This is 3-deoxy-manno-octulosonate cytidylyltransferase from Bartonella bacilliformis (strain ATCC 35685 / KC583 / Herrer 020/F12,63).